The chain runs to 679 residues: DNA ligase (679 aa).

NAD(+) contacts are provided by residues 32–36, 81–82, and Glu-115; these read DTLYD and SL. The active-site N6-AMP-lysine intermediate is the Lys-117. NAD(+) contacts are provided by Arg-138, Glu-175, Lys-293, and Lys-317. Cys-411, Cys-414, Cys-429, and Cys-434 together coordinate Zn(2+). Residues 601–679 form the BRCT domain; the sequence is NSSGALLGKT…EAELQKLLST (79 aa).

It belongs to the NAD-dependent DNA ligase family. LigA subfamily. Mg(2+) is required as a cofactor. It depends on Mn(2+) as a cofactor.

The catalysed reaction is NAD(+) + (deoxyribonucleotide)n-3'-hydroxyl + 5'-phospho-(deoxyribonucleotide)m = (deoxyribonucleotide)n+m + AMP + beta-nicotinamide D-nucleotide.. Functionally, DNA ligase that catalyzes the formation of phosphodiester linkages between 5'-phosphoryl and 3'-hydroxyl groups in double-stranded DNA using NAD as a coenzyme and as the energy source for the reaction. It is essential for DNA replication and repair of damaged DNA. In Parasynechococcus marenigrum (strain WH8102), this protein is DNA ligase.